We begin with the raw amino-acid sequence, 223 residues long: DNA mismatch repair protein MutH (223 aa).

This sequence belongs to the MutH family.

It localises to the cytoplasm. Its function is as follows. Sequence-specific endonuclease that cleaves unmethylated GATC sequences. It is involved in DNA mismatch repair. This Shewanella baltica (strain OS223) protein is DNA mismatch repair protein MutH.